Reading from the N-terminus, the 292-residue chain is Ribonuclease HIII (292 aa).

Positions 76 to 292 constitute an RNase H type-2 domain; the sequence is TNLIGTDEVG…TQKAMKIAQL (217 aa). Residues Asp-82, Glu-83, and Asp-186 each coordinate a divalent metal cation.

It belongs to the RNase HII family. RnhC subfamily. The cofactor is Mn(2+). Requires Mg(2+) as cofactor.

Its subcellular location is the cytoplasm. The catalysed reaction is Endonucleolytic cleavage to 5'-phosphomonoester.. Endonuclease that specifically degrades the RNA of RNA-DNA hybrids. In Lactococcus lactis subsp. cremoris (strain SK11), this protein is Ribonuclease HIII.